The chain runs to 677 residues: Methionine--tRNA ligase (677 aa).

The short motif at 15 to 25 is the 'HIGH' region element; the sequence is PYANGSIHLGH. Residues Cys-146, Cys-149, Cys-159, and Cys-162 each coordinate Zn(2+). The 'KMSKS' region signature appears at 333 to 337; the sequence is KMSKS. Lys-336 serves as a coordination point for ATP. Residues 575–677 enclose the tRNA-binding domain; sequence DFAKVDLRVA…AGAKPGHQVK (103 aa).

The protein belongs to the class-I aminoacyl-tRNA synthetase family. MetG type 1 subfamily. Homodimer. Requires Zn(2+) as cofactor.

It is found in the cytoplasm. The enzyme catalyses tRNA(Met) + L-methionine + ATP = L-methionyl-tRNA(Met) + AMP + diphosphate. Its function is as follows. Is required not only for elongation of protein synthesis but also for the initiation of all mRNA translation through initiator tRNA(fMet) aminoacylation. In Escherichia coli (strain K12), this protein is Methionine--tRNA ligase (metG).